Reading from the N-terminus, the 676-residue chain is MVDQEKAKLELDKLNKQIQHHDVLYYVQDNPEISDAEYDELCRKRNLILNAFPKLTQSNDYQNNIGSSPDTKFAKVKHEEKMFSLDNAFNQQDVEKFITRTKKFLNINDNQSIPLSCELKIDGLSFSVIYKKGEIYQASTRGNGYFGENITTNVKTIKNLPHIIHNAPDLLEVRGEIYIDRCDFIQLNNDGNNFANPRNAAAGSVRQLDHNITAQRKLKYFMYTIVNTACLTQEELLYQLKIWGFCVNEHTITTDNIEEAFNFYNQVYNNRSNINYDIDGIIYKVNDIKSQHILGTTSKSPRWAIAYKFPAAEAKTQLNKISIQIGRTGVLTPIAELSPINIGGVIVTRASLHNKNEIERKDIREGDYVIVKRAGDVIPQIVDVDKNLRTQELTKFVFPTTCPSCGSSVYQAKQEASIYCTGELFCKDQILEKIKHFVSKDAFNIIGFGKKQLLFFYEQRLITNITDIFTLEEKISNSDVKLESLHGWGEKSMSNLFSAINNSKVISLENFIFALGIRFIGKYIAKILANHFSSYETWYNEMLKLAQNEDYSLNIQQIGSKTIGSLKMFFSQPHNLNMINDLVKHLTITDTQSSSYLSLIHGKIIVFTGELSSMSRSEAKIRSETAGAKVSSSLSKNTDFLIAGNNPGSKYKKAQSLNVQILTEDLWLQYTQSSEN.

NAD(+) contacts are provided by residues 35–39 (DAEYD), 84–85 (SL), and Glu118. The active-site N6-AMP-lysine intermediate is the Lys120. Residues Arg141, Glu176, Lys284, and Lys308 each contribute to the NAD(+) site. 4 residues coordinate Zn(2+): Cys402, Cys405, Cys420, and Cys426. Residues 595–676 (SYLSLIHGKI…WLQYTQSSEN (82 aa)) form the BRCT domain.

It belongs to the NAD-dependent DNA ligase family. LigA subfamily. It depends on Mg(2+) as a cofactor. Requires Mn(2+) as cofactor.

The catalysed reaction is NAD(+) + (deoxyribonucleotide)n-3'-hydroxyl + 5'-phospho-(deoxyribonucleotide)m = (deoxyribonucleotide)n+m + AMP + beta-nicotinamide D-nucleotide.. In terms of biological role, DNA ligase that catalyzes the formation of phosphodiester linkages between 5'-phosphoryl and 3'-hydroxyl groups in double-stranded DNA using NAD as a coenzyme and as the energy source for the reaction. It is essential for DNA replication and repair of damaged DNA. The protein is DNA ligase of Ehrlichia chaffeensis (strain ATCC CRL-10679 / Arkansas).